The sequence spans 252 residues: MNKVVVKNVTFGEGAPKICVPMVGKTVAALKEEAEMLQTIDLDVVEWRVDFFEDVKDLAKVEAALGEIRAILPETPILFTFRSAKEGGELAVSDEFYFELNETLAGTGKIDLVDVELFNEEADVLRLIETAHKNNVKVVMSNHDFDKTPAKEEIVSRLTRMEALGADLPKIAVMPKSAGDVLTLLDATNTVFEKANQPIITMSMAGTGVISRLAGEVFGSAMTFGAAKKASAPGQIDVNELRHVLDLLHKQF.

3-dehydroquinate is bound by residues 46–48 (EWR) and arginine 82. The active-site Proton donor/acceptor is histidine 143. The Schiff-base intermediate with substrate role is filled by lysine 170. Residues arginine 212, serine 231, and glutamine 235 each coordinate 3-dehydroquinate.

This sequence belongs to the type-I 3-dehydroquinase family. In terms of assembly, homodimer.

The catalysed reaction is 3-dehydroquinate = 3-dehydroshikimate + H2O. Its pathway is metabolic intermediate biosynthesis; chorismate biosynthesis; chorismate from D-erythrose 4-phosphate and phosphoenolpyruvate: step 3/7. Its function is as follows. Involved in the third step of the chorismate pathway, which leads to the biosynthesis of aromatic amino acids. Catalyzes the cis-dehydration of 3-dehydroquinate (DHQ) and introduces the first double bond of the aromatic ring to yield 3-dehydroshikimate. In Listeria monocytogenes serovar 1/2a (strain ATCC BAA-679 / EGD-e), this protein is 3-dehydroquinate dehydratase.